Here is a 463-residue protein sequence, read N- to C-terminus: Fumarate hydratase class II (463 aa).

Substrate contacts are provided by residues serine 97–threonine 99, histidine 128–aspartate 131, serine 138–asparagine 140, and threonine 186. The active-site Proton donor/acceptor is the histidine 187. Serine 317 is an active-site residue. Residues serine 318 and lysine 323–asparagine 325 contribute to the substrate site.

This sequence belongs to the class-II fumarase/aspartase family. Fumarase subfamily. In terms of assembly, homotetramer.

It localises to the cytoplasm. The catalysed reaction is (S)-malate = fumarate + H2O. The protein operates within carbohydrate metabolism; tricarboxylic acid cycle; (S)-malate from fumarate: step 1/1. In terms of biological role, involved in the TCA cycle. Catalyzes the stereospecific interconversion of fumarate to L-malate. This is Fumarate hydratase class II from Campylobacter jejuni subsp. jejuni serotype O:2 (strain ATCC 700819 / NCTC 11168).